A 111-amino-acid polypeptide reads, in one-letter code: Colicin-Ia immunity protein (111 aa).

A run of 2 helical transmembrane segments spans residues 33 to 53 and 85 to 105; these read LLFW…KWYI and TGTV…SVII.

The protein localises to the cell membrane. Its function is as follows. This protein is able to protect a cell, which harbors the plasmid ColIa-CA53 encoding colicin Ia, against colicin Ia. In Escherichia coli, this protein is Colicin-Ia immunity protein.